A 325-amino-acid chain; its full sequence is Glutarate 2-hydroxylase (325 aa).

Fe cation contacts are provided by His160, Asp162, and His292.

The protein belongs to the glutarate hydroxylase family. In terms of assembly, homotetramer. Requires Fe(2+) as cofactor.

It carries out the reaction glutarate + 2-oxoglutarate + O2 = (S)-2-hydroxyglutarate + succinate + CO2. Its pathway is amino-acid degradation. Functionally, acts as an alpha-ketoglutarate-dependent dioxygenase catalyzing hydroxylation of glutarate (GA) to L-2-hydroxyglutarate (L2HG). Functions in a L-lysine degradation pathway that proceeds via cadaverine, glutarate and L-2-hydroxyglutarate. This is Glutarate 2-hydroxylase from Escherichia coli O6:H1 (strain CFT073 / ATCC 700928 / UPEC).